The primary structure comprises 278 residues: Putative phosphatase MG265 (278 aa).

Residue D9 is the Nucleophile of the active site. Residue D9 coordinates Mg(2+). L10 contacts phosphate. D11 is a binding site for Mg(2+). Phosphate is bound by residues 43-44 and K204; that span reads SG. D227 contributes to the Mg(2+) binding site. Residue N230 coordinates phosphate.

Belongs to the HAD-like hydrolase superfamily. Cof family. The cofactor is Mg(2+).

The chain is Putative phosphatase MG265 from Mycoplasma genitalium (strain ATCC 33530 / DSM 19775 / NCTC 10195 / G37) (Mycoplasmoides genitalium).